The sequence spans 421 residues: uncharacterized protein (421 aa).

4 CBS domains span residues M13–L74, L74–T133, M139–K195, and M217–M274.

This is an uncharacterized protein from Methanocaldococcus jannaschii (strain ATCC 43067 / DSM 2661 / JAL-1 / JCM 10045 / NBRC 100440) (Methanococcus jannaschii).